Reading from the N-terminus, the 93-residue chain is Small ribosomal subunit protein uS19 (93 aa).

The protein belongs to the universal ribosomal protein uS19 family.

Its function is as follows. Protein S19 forms a complex with S13 that binds strongly to the 16S ribosomal RNA. The chain is Small ribosomal subunit protein uS19 from Campylobacter lari (strain RM2100 / D67 / ATCC BAA-1060).